A 1027-amino-acid chain; its full sequence is Multidrug resistance protein MdtC (1027 aa).

Transmembrane regions (helical) follow at residues 16 to 36 (LLSL…PVAP), 333 to 353 (EVER…FLFL), 360 to 380 (LIPA…MYLC), 387 to 407 (LSLM…IVVL), 431 to 451 (VGFT…PLLL), 463 to 483 (FAIT…TLTP), 528 to 548 (WIMA…ISAP), 853 to 873 (LILI…LYES), 875 to 895 (IHPL…LLAL), 897 to 917 (LFDT…IGIV), 953 to 973 (PIIM…LSSG), and 984 to 1004 (ITIV…TPII).

It belongs to the resistance-nodulation-cell division (RND) (TC 2.A.6) family. MdtC subfamily. In terms of assembly, part of a tripartite efflux system composed of MdtA, MdtB and MdtC. MdtC forms a heteromultimer with MdtB.

It localises to the cell inner membrane. This chain is Multidrug resistance protein MdtC, found in Proteus mirabilis (strain HI4320).